Reading from the N-terminus, the 570-residue chain is Adenine deaminase (570 aa).

Belongs to the metallo-dependent hydrolases superfamily. Adenine deaminase family. Mn(2+) is required as a cofactor.

It carries out the reaction adenine + H2O + H(+) = hypoxanthine + NH4(+). The protein is Adenine deaminase of Petrotoga mobilis (strain DSM 10674 / SJ95).